A 507-amino-acid polypeptide reads, in one-letter code: 2,3-bisphosphoglycerate-independent phosphoglycerate mutase (507 aa).

Residues Asp13 and Ser63 each contribute to the Mn(2+) site. Ser63 acts as the Phosphoserine intermediate in catalysis. Substrate-binding positions include His124, Arg153–Asp154, Arg183, Arg189, Arg254–Arg257, and Lys330. Positions 396, 400, 437, 438, and 456 each coordinate Mn(2+).

It belongs to the BPG-independent phosphoglycerate mutase family. In terms of assembly, monomer. Mn(2+) serves as cofactor.

The enzyme catalyses (2R)-2-phosphoglycerate = (2R)-3-phosphoglycerate. Its pathway is carbohydrate degradation; glycolysis; pyruvate from D-glyceraldehyde 3-phosphate: step 3/5. In terms of biological role, catalyzes the interconversion of 2-phosphoglycerate and 3-phosphoglycerate. This is 2,3-bisphosphoglycerate-independent phosphoglycerate mutase from Paracoccus denitrificans (strain Pd 1222).